We begin with the raw amino-acid sequence, 258 residues long: Hydroxyacylglutathione hydrolase (258 aa).

Zn(2+) is bound by residues His-52, His-54, Asp-56, His-57, His-109, Asp-126, and His-164.

It belongs to the metallo-beta-lactamase superfamily. Glyoxalase II family. As to quaternary structure, monomer. The cofactor is Zn(2+).

The catalysed reaction is an S-(2-hydroxyacyl)glutathione + H2O = a 2-hydroxy carboxylate + glutathione + H(+). It participates in secondary metabolite metabolism; methylglyoxal degradation; (R)-lactate from methylglyoxal: step 2/2. Functionally, thiolesterase that catalyzes the hydrolysis of S-D-lactoyl-glutathione to form glutathione and D-lactic acid. This chain is Hydroxyacylglutathione hydrolase, found in Xylella fastidiosa (strain M12).